The chain runs to 305 residues: Probable 5-dehydro-4-deoxyglucarate dehydratase (305 aa).

Belongs to the DapA family.

The catalysed reaction is 5-dehydro-4-deoxy-D-glucarate + H(+) = 2,5-dioxopentanoate + CO2 + H2O. The protein operates within carbohydrate acid metabolism; D-glucarate degradation; 2,5-dioxopentanoate from D-glucarate: step 2/2. This chain is Probable 5-dehydro-4-deoxyglucarate dehydratase, found in Xanthomonas campestris pv. campestris (strain 8004).